Consider the following 299-residue polypeptide: 4-diphosphocytidyl-2-C-methyl-D-erythritol kinase (299 aa).

Lysine 11 is an active-site residue. 94–104 (PQGGGLGGGSS) contacts ATP. Aspartate 136 is an active-site residue.

This sequence belongs to the GHMP kinase family. IspE subfamily.

The catalysed reaction is 4-CDP-2-C-methyl-D-erythritol + ATP = 4-CDP-2-C-methyl-D-erythritol 2-phosphate + ADP + H(+). Its pathway is isoprenoid biosynthesis; isopentenyl diphosphate biosynthesis via DXP pathway; isopentenyl diphosphate from 1-deoxy-D-xylulose 5-phosphate: step 3/6. In terms of biological role, catalyzes the phosphorylation of the position 2 hydroxy group of 4-diphosphocytidyl-2C-methyl-D-erythritol. This is 4-diphosphocytidyl-2-C-methyl-D-erythritol kinase from Bordetella parapertussis (strain 12822 / ATCC BAA-587 / NCTC 13253).